An 804-amino-acid chain; its full sequence is Phenylalanine--tRNA ligase beta subunit (804 aa).

The tRNA-binding domain maps to 38–148 (RSYLKGFVIA…EDVPIGASFA (111 aa)). Positions 401-476 (PEIRQITFPL…RIYGLDKIKP (76 aa)) constitute a B5 domain. Positions 454, 460, 463, and 464 each coordinate Mg(2+). One can recognise an FDX-ACB domain in the interval 710–803 (SSLQMVRRDF…VTRMTGASLR (94 aa)).

It belongs to the phenylalanyl-tRNA synthetase beta subunit family. Type 1 subfamily. As to quaternary structure, tetramer of two alpha and two beta subunits. Requires Mg(2+) as cofactor.

It localises to the cytoplasm. The enzyme catalyses tRNA(Phe) + L-phenylalanine + ATP = L-phenylalanyl-tRNA(Phe) + AMP + diphosphate + H(+). The sequence is that of Phenylalanine--tRNA ligase beta subunit from Bartonella henselae (strain ATCC 49882 / DSM 28221 / CCUG 30454 / Houston 1) (Rochalimaea henselae).